A 375-amino-acid chain; its full sequence is Alcohol dehydrogenase 1 (375 aa).

N-acetylalanine is present on alanine 1. Zn(2+) is bound by residues cysteine 46, histidine 68, cysteine 98, cysteine 101, cysteine 104, cysteine 112, and cysteine 175. NAD(+) is bound by residues 200 to 205, aspartate 224, lysine 229, 293 to 295, and arginine 370; these read GLGGVG and VGL.

The protein belongs to the zinc-containing alcohol dehydrogenase family. Class-I subfamily. The cofactor is Zn(2+).

It localises to the cytoplasm. The enzyme catalyses a primary alcohol + NAD(+) = an aldehyde + NADH + H(+). The catalysed reaction is a secondary alcohol + NAD(+) = a ketone + NADH + H(+). This chain is Alcohol dehydrogenase 1, found in Pelophylax perezi (Perez's frog).